We begin with the raw amino-acid sequence, 154 residues long: Aspartate carbamoyltransferase regulatory chain (154 aa).

Zn(2+) is bound by residues Cys109, Cys114, Cys138, and Cys141.

This sequence belongs to the PyrI family. In terms of assembly, contains catalytic and regulatory chains. Requires Zn(2+) as cofactor.

In terms of biological role, involved in allosteric regulation of aspartate carbamoyltransferase. This Aliivibrio salmonicida (strain LFI1238) (Vibrio salmonicida (strain LFI1238)) protein is Aspartate carbamoyltransferase regulatory chain.